The following is a 162-amino-acid chain: UPF0114 protein SO_3997 (162 aa).

The next 3 membrane-spanning stretches (helical) occupy residues 10-32 (YASRWIMAPIYLGLSLVLLGLGI), 53-75 (LVLVTLSLIDITLVGGLIVMVMF), and 136-156 (IMWYLLIHITFVLSAFAMGYL).

The protein belongs to the UPF0114 family.

The protein localises to the cell membrane. The chain is UPF0114 protein SO_3997 from Shewanella oneidensis (strain ATCC 700550 / JCM 31522 / CIP 106686 / LMG 19005 / NCIMB 14063 / MR-1).